Reading from the N-terminus, the 89-residue chain is Small ribosomal subunit protein uS14A (89 aa).

The protein belongs to the universal ribosomal protein uS14 family. In terms of assembly, part of the 30S ribosomal subunit. Contacts proteins S3 and S10.

Functionally, binds 16S rRNA, required for the assembly of 30S particles and may also be responsible for determining the conformation of the 16S rRNA at the A site. In Levilactobacillus brevis (strain ATCC 367 / BCRC 12310 / CIP 105137 / JCM 1170 / LMG 11437 / NCIMB 947 / NCTC 947) (Lactobacillus brevis), this protein is Small ribosomal subunit protein uS14A.